The primary structure comprises 247 residues: tRNA pseudouridine synthase A (247 aa).

The Nucleophile role is filled by Asp53. Tyr111 lines the substrate pocket.

Belongs to the tRNA pseudouridine synthase TruA family. In terms of assembly, homodimer.

The catalysed reaction is uridine(38/39/40) in tRNA = pseudouridine(38/39/40) in tRNA. Formation of pseudouridine at positions 38, 39 and 40 in the anticodon stem and loop of transfer RNAs. This chain is tRNA pseudouridine synthase A, found in Bacillus licheniformis (strain ATCC 14580 / DSM 13 / JCM 2505 / CCUG 7422 / NBRC 12200 / NCIMB 9375 / NCTC 10341 / NRRL NRS-1264 / Gibson 46).